A 407-amino-acid chain; its full sequence is MKTIVKLDLDKKPWEQDGQIHNRWHPDLPMIAMVKPGDEFRVECMDWTGGQIGNNDSANDVRDVDLTQVHYLSGPIGVEGAEPGDLMVVDILDVGTFDDSQWGFNGLFAKENGGGFLTDHFPEASKTIWDFHGVYTTSRHVPKVRYAGIMHPGLIGCLPSKELLDTWNKREGDLIATDPDRVPPLACPPTSQSAVMGRLSGDAAKKAAAEGARTVPPRDHGGNCDIKNLTKGSRVYFPVYVKDGGLSMGDLHFSQGDGEITFCGAIEMAGYLDIKVGLIKDGVKKYGIKNPVFQPSPITPTYRDYMIFEGISVDEAGKQHYLDVHIAYRQACLNAIEYLKKFGYSGEQAVSILGTAPVEGHISGIVDIPNACATLWIPTEIFEFDIRPNADGPKIMVPPGVDVSFTS.

As to quaternary structure, homotrimer.

It carries out the reaction formamide + H2O = formate + NH4(+). Its function is as follows. Hydrolyzes formamide with the production of ammonia which can be used as a source of nitrogen for growth. Also acts, more slowly, on acetamide, propanamide and butanamide. In Methylophilus methylotrophus (Bacterium W3A1), this protein is Formamidase (fmdA).